Consider the following 417-residue polypeptide: RH-like protein (417 aa).

11 consecutive transmembrane segments (helical) span residues 12-32 (CLPL…FFFT), 44-64 (LVAS…GLGF), 77-97 (VAFN…LDGF), 125-145 (ISMN…MELV), 172-192 (IHVF…KPLP), 203-223 (TSPS…WPTF), 238-258 (VFST…VSSL), 265-285 (INMT…SASC), 287-307 (VIHS…ISIG), 331-351 (TFGL…ALRV), and 358-378 (MIGF…AMSI).

This sequence belongs to the ammonium transporter (TC 2.A.49) family. Rh subfamily.

It localises to the membrane. May be part of an oligomeric complex which is likely to have a transport or channel function in the erythrocyte membrane. The chain is RH-like protein from Macaca mulatta (Rhesus macaque).